The chain runs to 150 residues: Large ribosomal subunit protein bL9 (150 aa).

The protein belongs to the bacterial ribosomal protein bL9 family.

Its function is as follows. Binds to the 23S rRNA. This Limosilactobacillus reuteri (strain DSM 20016) (Lactobacillus reuteri) protein is Large ribosomal subunit protein bL9.